Here is a 360-residue protein sequence, read N- to C-terminus: UPF0284 protein APE_2029.1 (360 aa).

It belongs to the UPF0284 family.

The protein is UPF0284 protein APE_2029.1 of Aeropyrum pernix (strain ATCC 700893 / DSM 11879 / JCM 9820 / NBRC 100138 / K1).